A 179-amino-acid chain; its full sequence is NAD(P)H-quinone oxidoreductase subunit I, chloroplastic (179 aa).

4Fe-4S ferredoxin-type domains lie at 55–84 and 95–124; these read GRIH…VDWR and LNYS…MTEE. [4Fe-4S] cluster contacts are provided by cysteine 64, cysteine 67, cysteine 70, cysteine 74, cysteine 104, cysteine 107, cysteine 110, and cysteine 114.

This sequence belongs to the complex I 23 kDa subunit family. NDH is composed of at least 16 different subunits, 5 of which are encoded in the nucleus. Requires [4Fe-4S] cluster as cofactor.

The protein resides in the plastid. The protein localises to the chloroplast thylakoid membrane. It carries out the reaction a plastoquinone + NADH + (n+1) H(+)(in) = a plastoquinol + NAD(+) + n H(+)(out). The catalysed reaction is a plastoquinone + NADPH + (n+1) H(+)(in) = a plastoquinol + NADP(+) + n H(+)(out). Its function is as follows. NDH shuttles electrons from NAD(P)H:plastoquinone, via FMN and iron-sulfur (Fe-S) centers, to quinones in the photosynthetic chain and possibly in a chloroplast respiratory chain. The immediate electron acceptor for the enzyme in this species is believed to be plastoquinone. Couples the redox reaction to proton translocation, and thus conserves the redox energy in a proton gradient. This chain is NAD(P)H-quinone oxidoreductase subunit I, chloroplastic, found in Nuphar advena (Common spatterdock).